The primary structure comprises 573 residues: 2-isopropylmalate synthase (573 aa).

The 278-residue stretch at 37–314 (PRWLSTDLRD…DPQIDFSNID (278 aa)) folds into the Pyruvate carboxyltransferase domain. Residues D46, H253, H255, and N289 each coordinate Mg(2+). The segment at 456–573 (NPRNPWGRIQ…VVSAVNRAAR (118 aa)) is regulatory domain.

It belongs to the alpha-IPM synthase/homocitrate synthase family. LeuA type 2 subfamily. In terms of assembly, homodimer. Requires Mg(2+) as cofactor.

The protein resides in the cytoplasm. It catalyses the reaction 3-methyl-2-oxobutanoate + acetyl-CoA + H2O = (2S)-2-isopropylmalate + CoA + H(+). The protein operates within amino-acid biosynthesis; L-leucine biosynthesis; L-leucine from 3-methyl-2-oxobutanoate: step 1/4. Its function is as follows. Catalyzes the condensation of the acetyl group of acetyl-CoA with 3-methyl-2-oxobutanoate (2-ketoisovalerate) to form 3-carboxy-3-hydroxy-4-methylpentanoate (2-isopropylmalate). In Streptomyces avermitilis (strain ATCC 31267 / DSM 46492 / JCM 5070 / NBRC 14893 / NCIMB 12804 / NRRL 8165 / MA-4680), this protein is 2-isopropylmalate synthase.